Reading from the N-terminus, the 573-residue chain is Proline--tRNA ligase (573 aa).

It belongs to the class-II aminoacyl-tRNA synthetase family. ProS type 1 subfamily. Homodimer.

It localises to the cytoplasm. It carries out the reaction tRNA(Pro) + L-proline + ATP = L-prolyl-tRNA(Pro) + AMP + diphosphate. In terms of biological role, catalyzes the attachment of proline to tRNA(Pro) in a two-step reaction: proline is first activated by ATP to form Pro-AMP and then transferred to the acceptor end of tRNA(Pro). As ProRS can inadvertently accommodate and process non-cognate amino acids such as alanine and cysteine, to avoid such errors it has two additional distinct editing activities against alanine. One activity is designated as 'pretransfer' editing and involves the tRNA(Pro)-independent hydrolysis of activated Ala-AMP. The other activity is designated 'posttransfer' editing and involves deacylation of mischarged Ala-tRNA(Pro). The misacylated Cys-tRNA(Pro) is not edited by ProRS. This chain is Proline--tRNA ligase, found in Cupriavidus taiwanensis (strain DSM 17343 / BCRC 17206 / CCUG 44338 / CIP 107171 / LMG 19424 / R1) (Ralstonia taiwanensis (strain LMG 19424)).